Reading from the N-terminus, the 143-residue chain is Transcriptional regulator MraZ (143 aa).

SpoVT-AbrB domains are found at residues 5 to 47 (SHAP…PMAE) and 76 to 119 (AADD…DAQR).

The protein belongs to the MraZ family. In terms of assembly, forms oligomers.

It localises to the cytoplasm. The protein localises to the nucleoid. The chain is Transcriptional regulator MraZ from Frankia casuarinae (strain DSM 45818 / CECT 9043 / HFP020203 / CcI3).